Here is a 204-residue protein sequence, read N- to C-terminus: VQ motif-containing protein 13 (204 aa).

The span at 1-12 (MEKSPRYRDKAK) shows a compositional bias: basic and acidic residues. Residues 1–26 (MEKSPRYRDKAKNLLPSPSSCTTTPT) are disordered. Over residues 16-26 (PSPSSCTTTPT) the composition is skewed to low complexity. Serine 17 is subject to Phosphoserine. Residues 46–55 (FKQVVQLLTG) carry the VQ motif. A disordered region spans residues 56–90 (IPKNPTHQPDPRFPPFHSIPPIKAVTNKKQSSSFR). Phosphoserine is present on residues serine 73 and serine 128. At threonine 131 the chain carries Phosphothreonine. The segment at 133 to 204 (LMSDPFYRPG…HSPAPSPHDH (72 aa)) is disordered. The span at 143–152 (SFSQSPSDSK) shows a compositional bias: low complexity. A phosphoserine mark is found at serine 147 and serine 173. Phosphothreonine is present on residues threonine 177 and threonine 192. Residues serine 196 and serine 200 each carry the phosphoserine modification.

In terms of processing, phosphorylated on serine and threonine residues by MPK6.

It localises to the nucleus. May modulate WRKY transcription factor activities. This is VQ motif-containing protein 13 from Arabidopsis thaliana (Mouse-ear cress).